The following is a 409-amino-acid chain: Putative fatty acyl-CoA reductase 7 (409 aa).

Belongs to the fatty acyl-CoA reductase family.

The chain is Putative fatty acyl-CoA reductase 7 (FAR7) from Arabidopsis thaliana (Mouse-ear cress).